Reading from the N-terminus, the 435-residue chain is MNDTTSKECPSGPSAWSIASQWVDPGAQSAPWWKLIGSQLCLLAQEARYPIEKQFEILLFLYAKVLPRVGPLNKGEKFNSPSRYTSLLTDDGTPFEYSWKWNNSTSSPDIRYCIEAIGSHTGSSTDPYNYLETEKLLTQDLASCVPGLDLTWFHHFVKAFGIDQRQMASNNPDAPKANMFVAFEHVQKGVVVKAYFLPAAEAGSGGPPTFETFASATRGVLNNTAALDASLDFVKNNEMGIDLVPDMLAVDCVDPNKSRLKLYVSTTATSFASIVSVMTLGGKITDVDRGIKELEVLLSFALGKETPISRDDELNVQSVFDKGLAHDFDLYGRMTYYFDIAPSSKLPDVKLYIPVIRFGRSDEAVASGLGQYLRLRQRDQFHDGFMRALGSIGAGHPEGSGHRLQTYLAVAFQRDGSLAITSYINPGVYHDDLKG.

Residues R111, K193, Y195, R259, K261, Y263, Y352, and Y423 each contribute to the dimethylallyl diphosphate site.

This sequence belongs to the tryptophan dimethylallyltransferase family.

The protein operates within secondary metabolite biosynthesis. Its function is as follows. DMATS-type prenyltransferase; part of the fragmented gene cluster that mediates the biosynthesis of fusarochromene, a tryptophan-derived metabolite closely related to a group of mycotoxins including fusarochromanone. Within the pathway, fscG catalyzes the prenylation of the primary alcohol produced by fscA which is necessary for the formation of the chromene ring by the oxidoreductase fscI. The first step of the pathway is the epimerization of L-tryptophan to D-tryptophan in the presence of the NRPS-like tryptophan epimerase fscC. D-tryptophan is subsequently hydroxylated by the tryptophan 6-hydroxylase fscE to yield 6-hydroxytryptophan. The pyrrole ring undergoes cleavaged by the tryptophan 2,3-dioxygenase fscD and is finally converted to 4-hydroxykyrunenine by the hydrolase fscH. The NRPS-like oxidoreductase fscA reduces the carboxyl group to primary alcohol and the DMATS-type prenyltransferase fscG performs prenylation, followed by the formation of a chromene ring catalyzed by the oxidoreductase fscI, which leads to desacetylfusarochromene. Epoxidation by fscF and rearrangement reactions of chromene double bonds convert compound desacetylfusarochromene to fusarochromanones. Although specific acetyltransferases were not found near the fsc gene cluster, several predicted enzymes containing the N-acetyltransferase superfamily domain are present in the genome of F.equiseti. These predicted enzymes may have the potential to convert desacetylfusarochromene to fusarochromene. The sequence is that of DMATS-type prenyltransferase fscG from Fusarium equiseti (Fusarium scirpi).